We begin with the raw amino-acid sequence, 258 residues long: Type III pantothenate kinase (258 aa).

6–13 provides a ligand contact to ATP; sequence DVGNTNTV. Residues Y100 and 107–110 contribute to the substrate site; that span reads GADR. Catalysis depends on D109, which acts as the Proton acceptor. D129 is a binding site for K(+). T132 is a binding site for ATP. A substrate-binding site is contributed by T184.

This sequence belongs to the type III pantothenate kinase family. As to quaternary structure, homodimer. The cofactor is NH4(+). Requires K(+) as cofactor.

Its subcellular location is the cytoplasm. The enzyme catalyses (R)-pantothenate + ATP = (R)-4'-phosphopantothenate + ADP + H(+). Its pathway is cofactor biosynthesis; coenzyme A biosynthesis; CoA from (R)-pantothenate: step 1/5. Catalyzes the phosphorylation of pantothenate (Pan), the first step in CoA biosynthesis. In Geobacillus kaustophilus (strain HTA426), this protein is Type III pantothenate kinase.